Reading from the N-terminus, the 847-residue chain is Aryl hydrocarbon receptor (847 aa).

Residues 1 to 39 form a disordered region; sequence MNGGGANITYASRKRRKPVQKTVKPIPAEGIKSNPSKRH. Short sequence motifs (nuclear localization signal) lie at residues 13–16 and 37–42; these read RKRR and KRHRDR. One can recognise a bHLH domain in the interval 27 to 80; sequence PAEGIKSNPSKRHRDRLNTELDRLASLLPFPQDVINKLDKLSVLRLSVSYLRAK. A DNA-binding region spans residues 38–66; the sequence is RHRDRLNTELDRLASLLPFPQDVINKLDK. Required for maintaining the overall integrity of the AHR:ARNT heterodimer and its transcriptional activity stretches follow at residues 50–82, 117–125, and 264–266; these read LASL…AKSF, LLQALNGFV, and FAI. The Nuclear export signal signature appears at 64-72; that stretch reads LDKLSVLRL. The PAS 1 domain occupies 120–173; that stretch reads ALNGFVLVVTVDALVFYASSTIQDYLGFQQSDVIHQSVYELIHTEDRAEFQRQL. Positions 281 to 336 constitute a PAS 2 domain; it reads KNFIFRTKHKLDFTPTGCDAKGQIVLGYTEAELCMRGSGYQFIHAADMLYCAESHI. Residues 346–384 enclose the PAC domain; sequence LAVFRLLTKDNRWAWVQSNARFIYKNGRPDFIIATQRPL. Disordered stretches follow at residues 430–452 and 825–847; these read KSGT…VHPS and HLPP…GRLL. Residues 440-452 show a composition bias toward polar residues; the sequence is TKPTPSKDSVHPS.

As to quaternary structure, homodimer. Heterodimer; efficient DNA binding requires dimerization with another bHLH protein. Binds MYBBP1A. Interacts with coactivators including SRC-1, RIP140 and NOCA7, and with the corepressor SMRT. Interacts with NEDD8 and IVNS1ABP. Interacts with BMAL1. Interacts with HSP90AB1. Interacts with ARNT; the heterodimer ARNT:AHR binds to core DNA sequence 5'-TGCGTG-3' within the dioxin response element (DRE) of target gene promoters and activates their transcription. Interacts with TIPARP; leading to mono-ADP-ribosylation of AHR and subsequent inhibition of AHR. In terms of processing, mono-ADP-ribosylated, leading to inhibit transcription activator activity of AHR.

Its subcellular location is the cytoplasm. The protein localises to the nucleus. In terms of biological role, ligand-activated transcription factor that enables cells to adapt to changing conditions by sensing compounds from the environment, diet, microbiome and cellular metabolism, and which plays important roles in development, immunity and cancer. Upon ligand binding, translocates into the nucleus, where it heterodimerizes with ARNT and induces transcription by binding to xenobiotic response elements (XRE). Regulates a variety of biological processes, including angiogenesis, hematopoiesis, drug and lipid metabolism, cell motility and immune modulation. Xenobiotics can act as ligands: upon xenobiotic-binding, activates the expression of multiple phase I and II xenobiotic chemical metabolizing enzyme genes (such as the CYP1A1 gene). Mediates biochemical and toxic effects of halogenated aromatic hydrocarbons. Next to xenobiotics, natural ligands derived from plants, microbiota, and endogenous metabolism are potent AHR agonists. Tryptophan (Trp) derivatives constitute an important class of endogenous AHR ligands. Acts as a negative regulator of anti-tumor immunity: indoles and kynurenic acid generated by Trp catabolism act as ligand and activate AHR, thereby promoting AHR-driven cancer cell motility and suppressing adaptive immunity. Regulates the circadian clock by inhibiting the basal and circadian expression of the core circadian component PER1. Inhibits PER1 by repressing the CLOCK-BMAL1 heterodimer mediated transcriptional activation of PER1. The heterodimer ARNT:AHR binds to core DNA sequence 5'-TGCGTG-3' within the dioxin response element (DRE) of target gene promoters and activates their transcription. This Oryctolagus cuniculus (Rabbit) protein is Aryl hydrocarbon receptor (AHR).